A 160-amino-acid chain; its full sequence is Putative NrdI-like protein (160 aa).

It belongs to the NrdI family.

The protein is Putative NrdI-like protein of Streptococcus pyogenes serotype M6 (strain ATCC BAA-946 / MGAS10394).